The following is a 307-amino-acid chain: uncharacterized protein (307 aa).

Basic and acidic residues-rich tracts occupy residues 42–52 (TCRSPGEDKCP) and 112–121 (QKKEEPEGSH). The tract at residues 42-153 (TCRSPGEDKC…VPPAVASASA (112 aa)) is disordered. A compositionally biased stretch (basic residues) spans 129 to 139 (KQHKKAKKRKS).

This is an uncharacterized protein from Mus musculus (Mouse).